We begin with the raw amino-acid sequence, 318 residues long: Transaldolase (318 aa).

Residue lysine 126 is the Schiff-base intermediate with substrate of the active site.

Belongs to the transaldolase family. Type 1 subfamily. In terms of assembly, homodimer.

It localises to the cytoplasm. The enzyme catalyses D-sedoheptulose 7-phosphate + D-glyceraldehyde 3-phosphate = D-erythrose 4-phosphate + beta-D-fructose 6-phosphate. It functions in the pathway carbohydrate degradation; pentose phosphate pathway; D-glyceraldehyde 3-phosphate and beta-D-fructose 6-phosphate from D-ribose 5-phosphate and D-xylulose 5-phosphate (non-oxidative stage): step 2/3. Transaldolase is important for the balance of metabolites in the pentose-phosphate pathway. The sequence is that of Transaldolase from Cupriavidus metallidurans (strain ATCC 43123 / DSM 2839 / NBRC 102507 / CH34) (Ralstonia metallidurans).